The chain runs to 151 residues: 3-hydroxyacyl-[acyl-carrier-protein] dehydratase FabZ (151 aa).

The active site involves histidine 56.

The protein belongs to the thioester dehydratase family. FabZ subfamily.

The protein resides in the cytoplasm. It carries out the reaction a (3R)-hydroxyacyl-[ACP] = a (2E)-enoyl-[ACP] + H2O. Involved in unsaturated fatty acids biosynthesis. Catalyzes the dehydration of short chain beta-hydroxyacyl-ACPs and long chain saturated and unsaturated beta-hydroxyacyl-ACPs. The chain is 3-hydroxyacyl-[acyl-carrier-protein] dehydratase FabZ from Nitrobacter winogradskyi (strain ATCC 25391 / DSM 10237 / CIP 104748 / NCIMB 11846 / Nb-255).